The following is a 281-amino-acid chain: Shikimate dehydrogenase (NADP(+)) (281 aa).

Shikimate is bound by residues 14-16 (SRS) and T61. The active-site Proton acceptor is the K65. Residues N86 and D101 each coordinate shikimate. NADP(+) contacts are provided by residues 127-131 (GAGGA), 151-156 (NRTLAR), and V216. Y218 provides a ligand contact to shikimate. G239 lines the NADP(+) pocket.

This sequence belongs to the shikimate dehydrogenase family. Homodimer.

The enzyme catalyses shikimate + NADP(+) = 3-dehydroshikimate + NADPH + H(+). It functions in the pathway metabolic intermediate biosynthesis; chorismate biosynthesis; chorismate from D-erythrose 4-phosphate and phosphoenolpyruvate: step 4/7. Its function is as follows. Involved in the biosynthesis of the chorismate, which leads to the biosynthesis of aromatic amino acids. Catalyzes the reversible NADPH linked reduction of 3-dehydroshikimate (DHSA) to yield shikimate (SA). The sequence is that of Shikimate dehydrogenase (NADP(+)) from Azorhizobium caulinodans (strain ATCC 43989 / DSM 5975 / JCM 20966 / LMG 6465 / NBRC 14845 / NCIMB 13405 / ORS 571).